We begin with the raw amino-acid sequence, 99 residues long: Turripeptide OL71 (99 aa).

In terms of processing, contains 5 disulfide bonds. As to expression, expressed by the venom duct.

It is found in the secreted. In terms of biological role, acts as a neurotoxin by inhibiting an ion channel. The sequence is that of Turripeptide OL71 from Iotyrris olangoensis (Sea snail).